A 2026-amino-acid polypeptide reads, in one-letter code: Fatty acid synthase subunit beta (2026 aa).

Residues 148-526 are acetyltransferase (AT) domain; sequence ILMAFGGQGS…VDGRGVRIIA (379 aa). Residue Ser-268 is the For acetyltransferase activity of the active site. The enoyl reductase (ER) domain stretch occupies residues 579-824; sequence SQLLQAPPII…LILAAAGVAD (246 aa). A dehydratase (DH) domain region spans residues 1130 to 1604; it reads SQVTGSVRSA…LPGDQLTVRI (475 aa). In terms of domain architecture, MaoC-like spans 1512-1625; that stretch reads PGLIDNGSRT…LSVAAYREGT (114 aa). Residues 1643-2016 are malonyl/palmitoyl transferase (MT/PT) domain; sequence YLFTGQGSQA…LEEAAAVTGS (374 aa). Ser-1788 (for malonyltransferase activity) is an active-site residue.

It belongs to the fungal fatty acid synthetase subunit beta family. As to quaternary structure, [Alpha(6)beta(6)] hexamers of two multifunctional subunits (alpha and beta).

It carries out the reaction acetyl-CoA + n malonyl-CoA + 2n NADPH + 4n H(+) = a long-chain-acyl-CoA + n CoA + n CO2 + 2n NADP(+).. It catalyses the reaction holo-[ACP] + acetyl-CoA = acetyl-[ACP] + CoA. The catalysed reaction is holo-[ACP] + malonyl-CoA = malonyl-[ACP] + CoA. The enzyme catalyses a (3R)-hydroxyacyl-[ACP] = a (2E)-enoyl-[ACP] + H2O. It carries out the reaction a 2,3-saturated acyl-[ACP] + NAD(+) = a (2E)-enoyl-[ACP] + NADH + H(+). It catalyses the reaction (9Z)-octadecenoyl-[ACP] + H2O = (9Z)-octadecenoate + holo-[ACP] + H(+). The protein operates within secondary metabolite biosynthesis. Fatty acid synthase beta subunit; part of the gene cluster that mediates the biosynthesis of oryzines, natural products with an unusual maleidride backbone. The two subunits of the fungal fatty acid synthase oryfasA and oryfasB probably form octenoic acid. This fatty acid is most likely activated by the acyl-CoA ligase oryP to give octenyl-CoA before the citrate synthase-like protein oryE catalyzes condensation with oxaloacetate to form tricarboxylic acid. The next steps of the pathways are conjectural, but a favorite possible route has been proposed, beginning with decarboxylation and concomitant dehydration by the decarboxylase oryM, followed by tautomerization, which may lead to the production of a diene intermediate. Reduction of this diene intermediate could give the known metabolite piliformic acid. On the pathway to oryzine B and oryzine A, however, hydroxylation of the diene by the alpha-ketoglutarate-dependent dioxygenase oryG and lactonisation by the lactonohydrolases oryH or oryL could give oryzine B directly. Finally, enoyl reduction by the dehydrogenase oryD would then convert oryzine B into oryzine A. The sequence is that of Fatty acid synthase subunit beta from Aspergillus oryzae (strain ATCC 42149 / RIB 40) (Yellow koji mold).